The sequence spans 51 residues: MSHNMKGQKIRLAKAHKQNTRVPVWVIVKTNRKVVSHPRRRHWRRRSLDVK.

It belongs to the eukaryotic ribosomal protein eL39 family.

The sequence is that of Large ribosomal subunit protein eL39 from Methanosarcina barkeri (strain Fusaro / DSM 804).